We begin with the raw amino-acid sequence, 113 residues long: Large ribosomal subunit protein uL22 (113 aa).

It belongs to the universal ribosomal protein uL22 family. As to quaternary structure, part of the 50S ribosomal subunit.

Its function is as follows. This protein binds specifically to 23S rRNA; its binding is stimulated by other ribosomal proteins, e.g. L4, L17, and L20. It is important during the early stages of 50S assembly. It makes multiple contacts with different domains of the 23S rRNA in the assembled 50S subunit and ribosome. The globular domain of the protein is located near the polypeptide exit tunnel on the outside of the subunit, while an extended beta-hairpin is found that lines the wall of the exit tunnel in the center of the 70S ribosome. The chain is Large ribosomal subunit protein uL22 from Geobacillus thermodenitrificans (strain NG80-2).